The primary structure comprises 121 residues: Large ribosomal subunit protein uL18 (121 aa).

The protein belongs to the universal ribosomal protein uL18 family. In terms of assembly, part of the 50S ribosomal subunit; part of the 5S rRNA/L5/L18/L25 subcomplex. Contacts the 5S and 23S rRNAs.

In terms of biological role, this is one of the proteins that bind and probably mediate the attachment of the 5S RNA into the large ribosomal subunit, where it forms part of the central protuberance. This is Large ribosomal subunit protein uL18 from Buchnera aphidicola subsp. Baizongia pistaciae (strain Bp).